The following is a 431-amino-acid chain: Enolase (431 aa).

A (2R)-2-phosphoglycerate-binding site is contributed by glutamine 167. The Proton donor role is filled by glutamate 209. 3 residues coordinate Mg(2+): aspartate 246, glutamate 289, and aspartate 316. Residues lysine 341, arginine 370, serine 371, and lysine 392 each contribute to the (2R)-2-phosphoglycerate site. Lysine 341 functions as the Proton acceptor in the catalytic mechanism.

Belongs to the enolase family. In terms of assembly, component of the RNA degradosome, a multiprotein complex involved in RNA processing and mRNA degradation. The cofactor is Mg(2+).

It localises to the cytoplasm. The protein resides in the secreted. It is found in the cell surface. The enzyme catalyses (2R)-2-phosphoglycerate = phosphoenolpyruvate + H2O. It participates in carbohydrate degradation; glycolysis; pyruvate from D-glyceraldehyde 3-phosphate: step 4/5. In terms of biological role, catalyzes the reversible conversion of 2-phosphoglycerate (2-PG) into phosphoenolpyruvate (PEP). It is essential for the degradation of carbohydrates via glycolysis. The sequence is that of Enolase from Hahella chejuensis (strain KCTC 2396).